A 369-amino-acid chain; its full sequence is Translocating chain-associated membrane protein 1-like 1 (369 aa).

Residues 1 to 29 lie on the Cytoplasmic side of the membrane; the sequence is MGLRKKSTKNPPVLSQEFILQNHADIVSC. A helical transmembrane segment spans residues 30-50; it reads VGMFFLLGLVFEGTAEASIVF. Over 51–81 the chain is Lumenal; it reads LTLQHSVAVPAAEEQATGSKSLYYYGVKDLA. The helical transmembrane segment at 82–102 threads the bilayer; that stretch reads TVFFYMLVAIIIHATIQEYVL. Residues 103–121 lie on the Cytoplasmic side of the membrane; it reads DKINKRMQFTKAKQNKFNE. Residues 117 to 326 form the TLC domain; that stretch reads NKFNESGQFS…TLWLQRWVED (210 aa). The helical transmembrane segment at 122 to 142 threads the bilayer; the sequence is SGQFSVFYFFSCIWGTFILIS. Over 143 to 164 the chain is Lumenal; the sequence is ENCLSDPTLIWKARPHSMMTFQ. A helical membrane pass occupies residues 165 to 185; that stretch reads MKFFYISQLAYWFHAFPELYF. At 186–196 the chain is on the cytoplasmic side; the sequence is QKTKKQDIPRQ. A helical membrane pass occupies residues 197-215; the sequence is LVYIGLHLFHITGAYLLYL. Topologically, residues 216–219 are lumenal; that stretch reads NHLG. Residues 220 to 242 traverse the membrane as a helical segment; it reads LLLLVLHYFVELLSHMCGLFYFS. At 243–249 the chain is on the cytoplasmic side; sequence DEKYQKG. A helical transmembrane segment spans residues 250 to 270; it reads ISLWAIVFILGRLVTLIVSVL. The Lumenal portion of the chain corresponds to 271–297; that stretch reads TVGFHLAGSQNRNPDALTGNVNVLAAK. Residues 298–318 form a helical membrane-spanning segment; it reads IAVLSSSCTIQAYVTWNLITL. The Cytoplasmic portion of the chain corresponds to 319–369; sequence WLQRWVEDSNIQASCMKKKRSRSSKKRTENGVGVETSNRVDCPPKRKEKSS. Positions 335–369 are disordered; the sequence is KKKRSRSSKKRTENGVGVETSNRVDCPPKRKEKSS. The segment covering 360–369 has biased composition (basic and acidic residues); sequence CPPKRKEKSS.

It belongs to the TRAM family.

The protein localises to the endoplasmic reticulum membrane. In terms of biological role, stimulatory or required for the translocation of secretory proteins across the ER membrane. This Homo sapiens (Human) protein is Translocating chain-associated membrane protein 1-like 1 (TRAM1L1).